Consider the following 292-residue polypeptide: Phosphatidylglycerol--prolipoprotein diacylglyceryl transferase (292 aa).

3 helical membrane passes run 18 to 38, 67 to 87, and 105 to 125; these read LFGVTFALRWYALAYIAGLLI, LLTWVILGVILGGRLGFVLFY, and GGMSFHGGFLGVMTALVAFCL. Arginine 150 provides a ligand contact to a 1,2-diacyl-sn-glycero-3-phospho-(1'-sn-glycerol). The next 3 membrane-spanning stretches (helical) occupy residues 193-213, 222-242, and 266-286; these read QIYEAGLEGILLFTVLSLLVW, GSVSGMFLAGYGATRFLVEFV, and GLTMGQILSLPMILLGLYLIL.

The protein belongs to the Lgt family.

The protein localises to the cell inner membrane. It catalyses the reaction L-cysteinyl-[prolipoprotein] + a 1,2-diacyl-sn-glycero-3-phospho-(1'-sn-glycerol) = an S-1,2-diacyl-sn-glyceryl-L-cysteinyl-[prolipoprotein] + sn-glycerol 1-phosphate + H(+). The protein operates within protein modification; lipoprotein biosynthesis (diacylglyceryl transfer). Functionally, catalyzes the transfer of the diacylglyceryl group from phosphatidylglycerol to the sulfhydryl group of the N-terminal cysteine of a prolipoprotein, the first step in the formation of mature lipoproteins. This Cereibacter sphaeroides (strain ATCC 17023 / DSM 158 / JCM 6121 / CCUG 31486 / LMG 2827 / NBRC 12203 / NCIMB 8253 / ATH 2.4.1.) (Rhodobacter sphaeroides) protein is Phosphatidylglycerol--prolipoprotein diacylglyceryl transferase.